We begin with the raw amino-acid sequence, 492 residues long: GTPase Der (492 aa).

EngA-type G domains follow at residues 3–167 (FTLA…EKFE) and 207–382 (LQVA…DVWN). GTP is bound by residues 9–16 (GRPNVGKS), 56–60 (DSAGL), 119–122 (NKSE), 213–220 (GRPNAGKS), 260–264 (DTAGM), and 325–328 (NKWD). In terms of domain architecture, KH-like spans 383–469 (RRVPTAALNR…RLTLRGQGDK (87 aa)). The disordered stretch occupies residues 461–492 (LTLRGQGDKNPYKGKKKSTPSRLRKHLEGRKS). A compositionally biased stretch (basic residues) spans 472–492 (YKGKKKSTPSRLRKHLEGRKS).

The protein belongs to the TRAFAC class TrmE-Era-EngA-EngB-Septin-like GTPase superfamily. EngA (Der) GTPase family. In terms of assembly, associates with the 50S ribosomal subunit.

Functionally, GTPase that plays an essential role in the late steps of ribosome biogenesis. The chain is GTPase Der from Ruegeria sp. (strain TM1040) (Silicibacter sp.).